Consider the following 272-residue polypeptide: Bis(5'-nucleosyl)-tetraphosphatase, symmetrical (272 aa).

Belongs to the Ap4A hydrolase family.

The enzyme catalyses P(1),P(4)-bis(5'-adenosyl) tetraphosphate + H2O = 2 ADP + 2 H(+). Its function is as follows. Hydrolyzes diadenosine 5',5'''-P1,P4-tetraphosphate to yield ADP. The polypeptide is Bis(5'-nucleosyl)-tetraphosphatase, symmetrical (Wigglesworthia glossinidia brevipalpis).